Reading from the N-terminus, the 799-residue chain is MAFRVSGAVLGGAVRAPRLTGGGEGSLVFRHTGLFLTRGARVGCSGTHGAMRAAAAARKAVMVPEGENDGLASRADSAQFQSDELEVPDISEETTCGAGVADAQALNRVRVVPPPSDGQKIFQIDPMLQGYKYHLEYRYSLYRRIRSDIDEHEGGLEAFSRSYEKFGFNASAEGITYREWAPGAFSAALVGDVNNWDPNADRMSKNEFGVWEIFLPNNADGTSPIPHGSRVKVRMDTPSGIKDSIPAWIKYSVQAPGEIPYDGIYYDPPEEVKYVFRHAQPKRPKSLRIYETHVGMSSPEPKINTYVNFRDEVLPRIKKLGYNAVQIMAIQEHSYYGSFGYHVTNFFAPSSRFGTPEDLKSLIDRAHELGLLVLMDVVHSHASSNTLDGLNGFDGTDTHYFHSGPRGHHWMWDSRLFNYGNWEVLRFLLSNARWWLEEYKFDGFRFDGVTSMMYTHHGLQVTFTGNFNEYFGFATDVDAVVYLMLVNDLIHGLYPEAVTIGEDVSGMPTFALPVHDGGVGFDYRMHMAVADKWIDLLKQSDETWKMGDIVHTLTNRRWLEKCVTYAESHDQALVGDKTIAFWLMDKDMYDFMALDRPSTPTIDRGIALHKMIRLITMGLGGEGYLNFMGNEFGHPEWIDFPRGPQRLPSGKFIPGNNNSYDKCRRRFDLGDADYLRYHGMQEFDQAMQHLEQKYEFMTSDHQYISRKHEEDKVIVFEKGDLVFVFNFHCNNSYFDYRIGCRKPGVYKVVLDSDAGLFGGFSRIHHAAEHFTADCSHDNRPYSFSVYTPSRTCVVYAPVE.

Residues 1–57 (MAFRVSGAVLGGAVRAPRLTGGGEGSLVFRHTGLFLTRGARVGCSGTHGAMRAAAAA) constitute a chloroplast transit peptide. (1,4-alpha-D-glucosyl)n-binding residues include tryptophan 196 and lysine 232. Aspartate 447 functions as the Nucleophile in the catalytic mechanism. Glutamate 502 serves as the catalytic Proton donor.

Belongs to the glycosyl hydrolase 13 family. GlgB subfamily. In terms of assembly, monomer.

The protein resides in the plastid. It is found in the chloroplast. The protein localises to the amyloplast. The enzyme catalyses Transfers a segment of a (1-&gt;4)-alpha-D-glucan chain to a primary hydroxy group in a similar glucan chain.. Its pathway is glycan biosynthesis; starch biosynthesis. Functionally, catalyzes the formation of the alpha-1,6-glucosidic linkages in starch by scission of a 1,4-alpha-linked oligosaccharide from growing alpha-1,4-glucan chains and the subsequent attachment of the oligosaccharide to the alpha-1,6 position. The sequence is that of 1,4-alpha-glucan-branching enzyme 2, chloroplastic/amyloplastic (SBE1) from Zea mays (Maize).